We begin with the raw amino-acid sequence, 236 residues long: Pyridoxine 5'-phosphate synthase (236 aa).

Asparagine 6 contacts 3-amino-2-oxopropyl phosphate. 8-9 contributes to the 1-deoxy-D-xylulose 5-phosphate binding site; that stretch reads DH. Arginine 17 provides a ligand contact to 3-amino-2-oxopropyl phosphate. Catalysis depends on histidine 42, which acts as the Proton acceptor. 1-deoxy-D-xylulose 5-phosphate is bound by residues arginine 44 and histidine 49. Catalysis depends on glutamate 69, which acts as the Proton acceptor. 1-deoxy-D-xylulose 5-phosphate is bound at residue threonine 99. The Proton donor role is filled by histidine 192. Residues glycine 193 and 216–217 contribute to the 3-amino-2-oxopropyl phosphate site; that span reads GH.

This sequence belongs to the PNP synthase family. In terms of assembly, homooctamer; tetramer of dimers.

It is found in the cytoplasm. It catalyses the reaction 3-amino-2-oxopropyl phosphate + 1-deoxy-D-xylulose 5-phosphate = pyridoxine 5'-phosphate + phosphate + 2 H2O + H(+). It functions in the pathway cofactor biosynthesis; pyridoxine 5'-phosphate biosynthesis; pyridoxine 5'-phosphate from D-erythrose 4-phosphate: step 5/5. Its function is as follows. Catalyzes the complicated ring closure reaction between the two acyclic compounds 1-deoxy-D-xylulose-5-phosphate (DXP) and 3-amino-2-oxopropyl phosphate (1-amino-acetone-3-phosphate or AAP) to form pyridoxine 5'-phosphate (PNP) and inorganic phosphate. In Aquifex pyrophilus, this protein is Pyridoxine 5'-phosphate synthase.